The sequence spans 340 residues: Glyceraldehyde-3-phosphate dehydrogenase (340 aa).

Residues 11–12 (SI) and Gly111 contribute to the NAD(+) site. D-glyceraldehyde 3-phosphate is bound at residue 140–142 (SCN). Cys141 serves as the catalytic Nucleophile. Arg169 lines the NAD(+) pocket. A D-glyceraldehyde 3-phosphate-binding site is contributed by 195 to 196 (HG). Position 303 (Gln303) interacts with NAD(+).

It belongs to the glyceraldehyde-3-phosphate dehydrogenase family. Homotetramer.

It is found in the cytoplasm. It catalyses the reaction D-glyceraldehyde 3-phosphate + phosphate + NADP(+) = (2R)-3-phospho-glyceroyl phosphate + NADPH + H(+). The enzyme catalyses D-glyceraldehyde 3-phosphate + phosphate + NAD(+) = (2R)-3-phospho-glyceroyl phosphate + NADH + H(+). It participates in carbohydrate degradation; glycolysis; pyruvate from D-glyceraldehyde 3-phosphate: step 1/5. In Methanococcus maripaludis (strain C5 / ATCC BAA-1333), this protein is Glyceraldehyde-3-phosphate dehydrogenase.